Consider the following 280-residue polypeptide: Acyl-[acyl-carrier-protein]--UDP-N-acetylglucosamine O-acyltransferase (280 aa).

The protein belongs to the transferase hexapeptide repeat family. LpxA subfamily. Homotrimer.

The protein localises to the cytoplasm. It carries out the reaction a (3R)-hydroxyacyl-[ACP] + UDP-N-acetyl-alpha-D-glucosamine = a UDP-3-O-[(3R)-3-hydroxyacyl]-N-acetyl-alpha-D-glucosamine + holo-[ACP]. The protein operates within glycolipid biosynthesis; lipid IV(A) biosynthesis; lipid IV(A) from (3R)-3-hydroxytetradecanoyl-[acyl-carrier-protein] and UDP-N-acetyl-alpha-D-glucosamine: step 1/6. Functionally, involved in the biosynthesis of lipid A, a phosphorylated glycolipid that anchors the lipopolysaccharide to the outer membrane of the cell. The protein is Acyl-[acyl-carrier-protein]--UDP-N-acetylglucosamine O-acyltransferase of Chlamydia trachomatis serovar L2 (strain ATCC VR-902B / DSM 19102 / 434/Bu).